We begin with the raw amino-acid sequence, 181 residues long: Ribulose bisphosphate carboxylase small subunit, chloroplastic 2 (181 aa).

The transit peptide at 1–54 directs the protein to the chloroplast; that stretch reads MASSMLSSAAVVTSPAQATMVAPFTGLKSSAAFPVTRKANNDITSIASNGGRVS.

This sequence belongs to the RuBisCO small chain family. In terms of assembly, heterohexadecamer of 8 large and 8 small subunits.

The protein localises to the plastid. The protein resides in the chloroplast. In terms of biological role, ruBisCO catalyzes two reactions: the carboxylation of D-ribulose 1,5-bisphosphate, the primary event in carbon dioxide fixation, as well as the oxidative fragmentation of the pentose substrate. Both reactions occur simultaneously and in competition at the same active site. Although the small subunit is not catalytic it is essential for maximal activity. The chain is Ribulose bisphosphate carboxylase small subunit, chloroplastic 2 from Brassica napus (Rape).